A 143-amino-acid polypeptide reads, in one-letter code: Large ribosomal subunit protein uL11 (143 aa).

The protein belongs to the universal ribosomal protein uL11 family. In terms of assembly, part of the ribosomal stalk of the 50S ribosomal subunit. Interacts with L10 and the large rRNA to form the base of the stalk. L10 forms an elongated spine to which L12 dimers bind in a sequential fashion forming a multimeric L10(L12)X complex. In terms of processing, one or more lysine residues are methylated.

Its function is as follows. Forms part of the ribosomal stalk which helps the ribosome interact with GTP-bound translation factors. The polypeptide is Large ribosomal subunit protein uL11 (Paracidovorax citrulli (strain AAC00-1) (Acidovorax citrulli)).